An 84-amino-acid polypeptide reads, in one-letter code: Envelope glycoprotein N (84 aa).

An N-terminal signal peptide occupies residues 1–26 (MSCKKSARQSLYVSLCLFYILVFAAA). Residues 27–47 (TEVDFYSPECHSHTYEIVLNS) lie on the Virion surface side of the membrane. Residues 48-68 (FSSIWLLINLFLLLCSFAIFL) form a helical membrane-spanning segment. At 69–84 (KYWCYKTFASETVKGY) the chain is on the intravirion side.

This sequence belongs to the herpesviridae glycoprotein N family. As to quaternary structure, interacts (via N-terminus) with gM (via N-terminus). The gM-gN heterodimer forms the gCII complex.

The protein resides in the virion membrane. It is found in the host membrane. It localises to the host Golgi apparatus. Its subcellular location is the host trans-Golgi network. Functionally, envelope glycoprotein necessary for proper maturation of gM and modulation of its membrane fusion activity. Also plays a critical role in virion morphogenesis. The protein is Envelope glycoprotein N of Homo sapiens (Human).